We begin with the raw amino-acid sequence, 128 residues long: Fluoride-specific ion channel FluC (128 aa).

Helical transmembrane passes span 2-22, 37-57, 65-85, and 101-121; these read LTFA…GAWL, WGTL…VALI, AWIR…FSTF, and AAAY…LGLA. Gly-77 and Thr-80 together coordinate Na(+).

This sequence belongs to the fluoride channel Fluc/FEX (TC 1.A.43) family.

Its subcellular location is the cell inner membrane. It catalyses the reaction fluoride(in) = fluoride(out). Na(+) is not transported, but it plays an essential structural role and its presence is essential for fluoride channel function. Its function is as follows. Fluoride-specific ion channel. Important for reducing fluoride concentration in the cell, thus reducing its toxicity. In Bordetella bronchiseptica (strain ATCC BAA-588 / NCTC 13252 / RB50) (Alcaligenes bronchisepticus), this protein is Fluoride-specific ion channel FluC.